The chain runs to 327 residues: Polyadenylate-binding protein-interacting protein 9 (327 aa).

A PAM2-like motif is present at residues 59–69 (KLNPLAKEFFP). The span at 97–113 (KQSGEEFDLDAKKDDNT) shows a compositional bias: basic and acidic residues. A disordered region spans residues 97 to 132 (KQSGEEFDLDAKKDDNTRKRRNYSQGRRRLTGRISK). Residues 114-125 (RKRRNYSQGRRR) carry the Bipartite nuclear localization signal motif. Over residues 114 to 127 (RKRRNYSQGRRRLT) the composition is skewed to basic residues. RRM domains lie at 141–216 (RTVY…PSKT) and 238–314 (RTIY…PSKT). The segment at 308–327 (RVSPSKTPVRPRITRPPSTN) is disordered.

Its subcellular location is the nucleus. This chain is Polyadenylate-binding protein-interacting protein 9 (CID9), found in Arabidopsis thaliana (Mouse-ear cress).